Reading from the N-terminus, the 512-residue chain is Na(+)/H(+) antiporter NhaB (512 aa).

A run of 11 helical transmembrane segments spans residues 28 to 48 (FLIINPLVFIFQPFMAGWLLV), 52 to 72 (IFTLAMALKCYPLLPGGLLAI), 97 to 117 (LLLMFMVAGIYFMKQLLLFIF), 144 to 164 (FLDALTVVAVVISVAIGFYGI), 201 to 221 (LMMHAGVGTALGGVMTMVGEP), 237 to 257 (FFLRVAPVSVPVFICGMLTCF), 296 to 330 (LALIAQGIIGAWLIFALAFHLAEVGLIGLSVIILA), 347 to 367 (TEALPFTALLAVFFAIVAVII), 390 to 410 (LFYLFNGLLSSISDNVFVGSV), 446 to 466 (ATPNGQAAFLFLLTSALAPLI), and 474 to 494 (VWMALPYTVVLTLVGLLCVKF).

This sequence belongs to the NhaB Na(+)/H(+) (TC 2.A.34) antiporter family.

It is found in the cell inner membrane. The catalysed reaction is 2 Na(+)(in) + 3 H(+)(out) = 2 Na(+)(out) + 3 H(+)(in). Its function is as follows. Na(+)/H(+) antiporter that extrudes sodium in exchange for external protons. This is Na(+)/H(+) antiporter NhaB from Enterobacter sp. (strain 638).